We begin with the raw amino-acid sequence, 38 residues long: Toxin Bcg III 31.16 (38 aa).

Disulfide bonds link Cys4-Cys37, Cys6-Cys30, and Cys20-Cys38.

The protein belongs to the sea anemone type 3 (BDS) potassium channel toxin family.

The protein localises to the secreted. It localises to the nematocyst. In terms of biological role, possible modulator of crustacean voltage-gated sodium channels (Nav). This Bunodosoma cangicum (Sea anemone) protein is Toxin Bcg III 31.16.